The primary structure comprises 455 residues: tRNA modification GTPase MnmE (455 aa).

(6S)-5-formyl-5,6,7,8-tetrahydrofolate-binding residues include R24, E81, and K120. The TrmE-type G domain maps to 216–378; the sequence is GMTVVIAGRP…LREHLKACMG (163 aa). N226 contacts K(+). Residues 226–231, 245–251, 270–273, and 335–338 each bind GTP; these read NAGKSS, TDIAGTT, DTAG, and NKAD. Residue S230 coordinates Mg(2+). K(+) is bound by residues T245, I247, and T250. T251 contributes to the Mg(2+) binding site. K455 contributes to the (6S)-5-formyl-5,6,7,8-tetrahydrofolate binding site.

Belongs to the TRAFAC class TrmE-Era-EngA-EngB-Septin-like GTPase superfamily. TrmE GTPase family. Homodimer. Heterotetramer of two MnmE and two MnmG subunits. The cofactor is K(+).

Its subcellular location is the cytoplasm. Functionally, exhibits a very high intrinsic GTPase hydrolysis rate. Involved in the addition of a carboxymethylaminomethyl (cmnm) group at the wobble position (U34) of certain tRNAs, forming tRNA-cmnm(5)s(2)U34. The sequence is that of tRNA modification GTPase MnmE from Ectopseudomonas mendocina (strain ymp) (Pseudomonas mendocina).